The primary structure comprises 526 residues: Peptide chain release factor 3 (526 aa).

One can recognise a tr-type G domain in the interval 8–277; it reads GKRRTFAIIS…GLTDWAPAPQ (270 aa). GTP is bound by residues 17 to 24, 85 to 89, and 139 to 142; these read SHPDAGKT, DTPGH, and NKLD.

The protein belongs to the TRAFAC class translation factor GTPase superfamily. Classic translation factor GTPase family. PrfC subfamily.

The protein localises to the cytoplasm. Increases the formation of ribosomal termination complexes and stimulates activities of RF-1 and RF-2. It binds guanine nucleotides and has strong preference for UGA stop codons. It may interact directly with the ribosome. The stimulation of RF-1 and RF-2 is significantly reduced by GTP and GDP, but not by GMP. This chain is Peptide chain release factor 3, found in Aliivibrio fischeri (strain MJ11) (Vibrio fischeri).